Here is a 196-residue protein sequence, read N- to C-terminus: Small ribosomal subunit protein uS4c (196 aa).

The segment at 15-43 (LGALPGLTRKTPKSGSNQKKKFHSGKKEQ) is disordered. The 62-residue stretch at 89-150 (MRLDNILFRL…NQRSKRLVQN (62 aa)) folds into the S4 RNA-binding domain.

Belongs to the universal ribosomal protein uS4 family. In terms of assembly, part of the 30S ribosomal subunit. Contacts protein S5. The interaction surface between S4 and S5 is involved in control of translational fidelity.

The protein resides in the plastid. It localises to the chloroplast. Functionally, one of the primary rRNA binding proteins, it binds directly to 16S rRNA where it nucleates assembly of the body of the 30S subunit. Its function is as follows. With S5 and S12 plays an important role in translational accuracy. The polypeptide is Small ribosomal subunit protein uS4c (rps4) (Bothriochloa ischaemum (Yellow bluestem)).